The sequence spans 156 residues: Small ribosomal subunit protein uS7 (156 aa).

The protein belongs to the universal ribosomal protein uS7 family. Part of the 30S ribosomal subunit. Contacts proteins S9 and S11.

In terms of biological role, one of the primary rRNA binding proteins, it binds directly to 16S rRNA where it nucleates assembly of the head domain of the 30S subunit. Is located at the subunit interface close to the decoding center, probably blocks exit of the E-site tRNA. This chain is Small ribosomal subunit protein uS7, found in Solibacter usitatus (strain Ellin6076).